The primary structure comprises 100 residues: Urease subunit gamma (100 aa).

Belongs to the urease gamma subunit family. In terms of assembly, heterotrimer of UreA (gamma), UreB (beta) and UreC (alpha) subunits. Three heterotrimers associate to form the active enzyme.

The protein resides in the cytoplasm. The enzyme catalyses urea + 2 H2O + H(+) = hydrogencarbonate + 2 NH4(+). The protein operates within nitrogen metabolism; urea degradation; CO(2) and NH(3) from urea (urease route): step 1/1. This is Urease subunit gamma from Cupriavidus pinatubonensis (strain JMP 134 / LMG 1197) (Cupriavidus necator (strain JMP 134)).